Here is a 325-residue protein sequence, read N- to C-terminus: MTRRNEKEEVPPQGKILDLFHPGIAPYAELMRIHRLLGFYLNTSPYLVGVAFSASISSTKIPIAVLLHRAMLLSIWSIFLRSAGCVWDDLIDMDLDSQISRTKSRPLPRGAVSPSNALLLTVALFACGGTVLIFLPWACTVDCLIVTFFALSYPFGKRFTDYPQITLMNIGWAVPMAMHSLGLDPLSQMTPTVCMFLFIGSVIIMIDVIYSRQDTEEDLKVGVKSMAVRFRDSIQLLSYSLLCASTGFLAMAGVLTGLGLPFFVLSVGGHFCGFWVLLRATQVGKSSGVESYAKYNMPKQAFRPRPETSCATWLLSTSRNEMGRA.

A run of 7 helical transmembrane segments spans residues 47–67 (LVGV…AVLL), 71–91 (MLLS…DDLI), 117–137 (ALLL…FLPW), 163–183 (PQIT…SLGL), 189–209 (MTPT…IDVI), 236–256 (LLSY…GVLT), and 258–278 (LGLP…WVLL).

This sequence belongs to the UbiA prenyltransferase family. The cofactor is Mg(2+).

Its subcellular location is the membrane. It catalyses the reaction 3,5-dimethylorsellinate + (2E,6E)-farnesyl diphosphate = (3R)-3-farnesyl-6-hydroxy-2,3,5-trimethyl-4-oxocyclohexa-1,5-diene-1-carboxylate + diphosphate + H(+). It participates in secondary metabolite biosynthesis; terpenoid biosynthesis. Functionally, prenytransferase; part of the gene cluster that mediates the biosynthesis of andrastins, meroterpenoid compounds that exhibit inhibitory activity against ras farnesyltransferase, suggesting that they could be promising leads for antitumor agents. The first step of the pathway is the synthesis of 3,5-dimethylorsellinic acid (DMOA) by the polyketide synthase adrD via condensation of one acetyl-CoA starter unit with 3 malonyl-CoA units and 2 methylations. DMAO is then converted to farnesyl-DMAO by the prenyltransferase adrG. The methyltransferase adrK catalyzes the methylation of the carboxyl group of farnesyl-DMAO to farnesyl-DMAO methyl ester which is further converted to epoxyfarnesyl-DMAO methyl ester by the FAD-dependent monooxygenase adrH. The terpene cyclase adrI then catalyzes the carbon skeletal rearrangement to generate the andrastin E, the first compound in the pathway having the andrastin scaffold, with the tetracyclic ring system. The post-cyclization tailoring enzymes adrF, adrE, adrJ, and adrA, are involved in the conversion of andrastin E into andrastin A. The short chain dehydrogenase adrF is responsible for the oxidation of the C-3 a hydroxyl group of andrastin E to yield the corresponding ketone, andrastin D. The ketoreductase adrE stereoselectively reduces the carbonyl moiety to reverse the stereochemistry of the C-3 position to yield andrastin F. The acetyltransferase adrJ is the acetyltransferase that attaches the acetyl group to the C-3 hydroxyl group of andrastin F to yield andrastin C. Finally, the cytochrome P450 monooxygenase adrA catalyzes two sequential oxidation reactions of the C-23 methyl group, to generate the corresponding alcohol andrastin B, and aldehyde andrastin A. This chain is Prenytransferase adrG, found in Penicillium rubens (strain ATCC 28089 / DSM 1075 / NRRL 1951 / Wisconsin 54-1255) (Penicillium chrysogenum).